Reading from the N-terminus, the 173-residue chain is NADH-quinone oxidoreductase subunit B (173 aa).

Cysteine 46, cysteine 47, cysteine 112, and cysteine 142 together coordinate [4Fe-4S] cluster.

Belongs to the complex I 20 kDa subunit family. As to quaternary structure, NDH-1 is composed of 14 different subunits. Subunits NuoB, C, D, E, F, and G constitute the peripheral sector of the complex. The cofactor is [4Fe-4S] cluster.

The protein localises to the cell membrane. It carries out the reaction a quinone + NADH + 5 H(+)(in) = a quinol + NAD(+) + 4 H(+)(out). NDH-1 shuttles electrons from NADH, via FMN and iron-sulfur (Fe-S) centers, to quinones in the respiratory chain. The immediate electron acceptor for the enzyme in this species is believed to be a menaquinone. Couples the redox reaction to proton translocation (for every two electrons transferred, four hydrogen ions are translocated across the cytoplasmic membrane), and thus conserves the redox energy in a proton gradient. This chain is NADH-quinone oxidoreductase subunit B, found in Desulfitobacterium hafniense (strain DSM 10664 / DCB-2).